A 199-amino-acid polypeptide reads, in one-letter code: Hematopoietic prostaglandin D synthase (199 aa).

The region spanning 2-79 (PNYKLLYFNM…YLTKNTDLAG (78 aa)) is the GST N-terminal domain. Residues Y8, R14, W39, 49–51 (GKI), and 63–64 (QS) each bind glutathione. One can recognise a GST C-terminal domain in the interval 81-199 (TALEQCQADA…WILKRPQTKL (119 aa)).

This sequence belongs to the GST superfamily. Sigma family. In terms of assembly, homodimer. Glutathione is required as a cofactor. Expressed in skin and oviduct.

It localises to the cytoplasm. It carries out the reaction prostaglandin H2 = prostaglandin D2. It catalyses the reaction RX + glutathione = an S-substituted glutathione + a halide anion + H(+). The enzyme catalyses 2-glyceryl-prostaglandin H2 = 2-glyceryl-prostaglandin D2. In terms of biological role, bifunctional enzyme which catalyzes both the conversion of PGH2 to PGD2, a prostaglandin involved in smooth muscle contraction/relaxation and a potent inhibitor of platelet aggregation, and the conjugation of glutathione with a wide range of aryl halides and organic isothiocyanates. Also exhibits low glutathione-peroxidase activity. In Mus musculus (Mouse), this protein is Hematopoietic prostaglandin D synthase.